The primary structure comprises 304 residues: Urease accessory protein UreD (304 aa).

It belongs to the UreD family. UreD, UreF and UreG form a complex that acts as a GTP-hydrolysis-dependent molecular chaperone, activating the urease apoprotein by helping to assemble the nickel containing metallocenter of UreC. The UreE protein probably delivers the nickel.

It is found in the cytoplasm. In terms of biological role, required for maturation of urease via the functional incorporation of the urease nickel metallocenter. The polypeptide is Urease accessory protein UreD (Haloquadratum walsbyi (strain DSM 16790 / HBSQ001)).